The chain runs to 93 residues: MSVTPERKSELISEYCLKKGDTGSSFVQCAILSERIRNLTEHLKIHKKDFHCRRGLMVLVCRRRNELQYIRRKYGNDRYLALVKQLGIRDVFH.

This sequence belongs to the universal ribosomal protein uS15 family. Part of the 30S ribosomal subunit. Forms a bridge to the 50S subunit in the 70S ribosome, contacting the 23S rRNA.

Functionally, one of the primary rRNA binding proteins, it binds directly to 16S rRNA where it helps nucleate assembly of the platform of the 30S subunit by binding and bridging several RNA helices of the 16S rRNA. Its function is as follows. Forms an intersubunit bridge (bridge B4) with the 23S rRNA of the 50S subunit in the ribosome. This chain is Small ribosomal subunit protein uS15, found in Ehrlichia ruminantium (strain Gardel).